Here is a 547-residue protein sequence, read N- to C-terminus: Serine/threonine-protein kinase pkn3 (547 aa).

In terms of domain architecture, Protein kinase spans 18 to 288; it reads YRVEALIGEG…EAFKAELQAV (271 aa). ATP is bound by residues 24 to 32 and Lys47; that span reads IGEGGMGKV. Asp142 functions as the Proton acceptor in the catalytic mechanism. The span at 290–299 shows a compositional bias: basic and acidic residues; it reads KERRRMDSAP. The segment at 290–327 is disordered; it reads KERRRMDSAPRRSANSSAVLAPLPRKSAASPQSDVRDA.

It belongs to the protein kinase superfamily. Ser/Thr protein kinase family.

It catalyses the reaction L-seryl-[protein] + ATP = O-phospho-L-seryl-[protein] + ADP + H(+). The catalysed reaction is L-threonyl-[protein] + ATP = O-phospho-L-threonyl-[protein] + ADP + H(+). The polypeptide is Serine/threonine-protein kinase pkn3 (pkn3) (Myxococcus xanthus).